A 721-amino-acid polypeptide reads, in one-letter code: ATP-dependent zinc metalloprotease FtsH (721 aa).

Over 1–44 the chain is Cytoplasmic; the sequence is MYFLKKIVNLFSSKIESEDNNVKKDDLTQPRKQSPEARKRRNRR. The chain crosses the membrane as a helical span at residues 45–65; that stretch reads IIFWLIILLIIGTIIGVIIYF. Topologically, residues 66–190 are extracellular; sequence SVRKEYDNVI…AGIPSSGFNP (125 aa). The chain crosses the membrane as a helical span at residues 191–211; the sequence is QVIISPLISIIFFIIFLYIIL. Over 212 to 721 the chain is Cytoplasmic; the sequence is RVSKAQSDSL…KDKEKDQKSN (510 aa). Residue 279–286 coordinates ATP; sequence GPPGTGKT. Residue His498 coordinates Zn(2+). The active site involves Glu499. His502 and Asp577 together coordinate Zn(2+). Positions 686 to 721 are disordered; that stretch reads NKREASQKQANSSVEEAKVVDDEESIKDKEKDQKSN. Basic and acidic residues predominate over residues 700-721; it reads EEAKVVDDEESIKDKEKDQKSN.

It in the central section; belongs to the AAA ATPase family. The protein in the C-terminal section; belongs to the peptidase M41 family. As to quaternary structure, homohexamer. The cofactor is Zn(2+).

It is found in the cell membrane. Its function is as follows. Acts as a processive, ATP-dependent zinc metallopeptidase for both cytoplasmic and membrane proteins. Plays a role in the quality control of integral membrane proteins. The protein is ATP-dependent zinc metalloprotease FtsH of Ureaplasma parvum serovar 3 (strain ATCC 27815 / 27 / NCTC 11736).